A 467-amino-acid chain; its full sequence is Cytochrome P450 monooxygenase azaI (467 aa).

Positions 1–28 are cleaved as a signal peptide; that stretch reads MESLAQLPGIFLPLAGCVLALSLSALLA. Cysteine 411 lines the heme pocket.

This sequence belongs to the cytochrome P450 family. The cofactor is heme.

Its pathway is secondary metabolite biosynthesis. In terms of biological role, cytochrome P450 monooxygenase; part of the gene cluster that mediates the biosynthesis of azaphilones, a class of fungal metabolites characterized by a highly oxygenated pyrano-quinone bicyclic core and exhibiting a broad range of bioactivities. In the first step, the non-reducing polyketide synthase azaA forms the hexaketide precursor from successive condensations of five malonyl-CoA units, presumably with a simple acetyl-CoA starter unit. The reactive polyketide chain then undergoes a PT-mediated C2-C7 cyclization to afford the aromatic ring and is eventually released as an aldehyde through the R-domain. The putative ketoreductase azaE is proposed to catalyze the reduction of the terminal ketone resulting in the early culture product FK17-P2a. The monooxygenase azaH was demonstrated to be the only enzyme required to convert FK17-P2a to azanigerone E. AzaH first hydroxylates the benzaldehyde intermediate FK17-P2a at C4, which triggers the formation of the pyran-ring to afford azanigerone E. In parallel, the 2,4-dimethylhexanoyl chain is synthesized by the HR-PKS azaB and is proposed to be transferred to the C4-hydroxyl of azanigerone E by the acyltransferase azaD directly from the ACP domain of azaB. Alternatively, the 2,4-dimethyl-hexanoyl chain may be offloaded from the HR-PKS as a carboxylic acid and converted to an acyl-CoA by azaF. The resulting acyl-CoA molecule could then be taken up as a substrate by AzaD to form azanigerone B. To yield the carboxylic acid substituent in azanigerone A, the hydroxypropyl side chain of azanigerone B would need to undergo a C-C oxidative cleavage catalyzed by cytochrome P450 AzaI. AzaI is proposed to act on a vicinal diol that leads to a C-C bond scission either through an alkoxyradical intermediate or a peroxy complex. In the biosynthesis of azanigerone A, azanigerone B first undergoes hydroxylation at C10, possibly catalyzed by one of the two FAD-dependent monooxygenases encoded in the cluster, azaG or azaL, resulting in the vicinal diol azanigerone C. Oxidative cleavage of azanigerone C by azaI would yield the corresponding aldehyde derivative of azanigerone A. Finally, the dehydrogenase azaJ is proposed to convert the aldehyde functional group into the carboxylic acid, completing the conversion from azanigerone B to azanigerone A. Alternatively, the oxidation of aldehyde to carboxylic acid may be catalyzed by the same P450 enzyme azaI via consecutive oxidation or by endogenous alcohol dehydrogenase. The protein is Cytochrome P450 monooxygenase azaI of Aspergillus niger (strain ATCC 1015 / CBS 113.46 / FGSC A1144 / LSHB Ac4 / NCTC 3858a / NRRL 328 / USDA 3528.7).